The following is a 519-amino-acid chain: Berghepain-1 (519 aa).

The Cytoplasmic portion of the chain corresponds to 1 to 32; it reads MINDIRRINITTSSIESLNENSKYLKRNHKRT. The chain crosses the membrane as a helical; Signal-anchor for type II membrane protein span at residues 33–53; sequence IKICAYAITTFALFFIVVVYF. The Lumenal portion of the chain corresponds to 54 to 519; that stretch reads KNQTNVNDAN…IGIDVFFPIL (466 aa). Asparagine 55 and asparagine 143 each carry an N-linked (GlcNAc...) asparagine glycan. 4 disulfide bridges follow: cysteine 298-cysteine 340, cysteine 333-cysteine 373, cysteine 358-cysteine 378, and cysteine 427-cysteine 508. Cysteine 301 is an active-site residue. Residue asparagine 432 is glycosylated (N-linked (GlcNAc...) asparagine). Catalysis depends on residues histidine 433 and asparagine 483.

This sequence belongs to the peptidase C1 family.

The protein resides in the membrane. In terms of biological role, cysteine protease. Required for host hepatocyte-derived merozoite infectivity and to a lesser extent for host erythrocyte-derived merozoite infectivity. This is Berghepain-1 from Plasmodium berghei (strain Anka).